A 206-amino-acid polypeptide reads, in one-letter code: Small ribosomal subunit protein uS4 (206 aa).

Residues 96–159 enclose the S4 RNA-binding domain; sequence TRLDNVVYRM…KKQARISASL (64 aa).

It belongs to the universal ribosomal protein uS4 family. In terms of assembly, part of the 30S ribosomal subunit. Contacts protein S5. The interaction surface between S4 and S5 is involved in control of translational fidelity.

Its function is as follows. One of the primary rRNA binding proteins, it binds directly to 16S rRNA where it nucleates assembly of the body of the 30S subunit. With S5 and S12 plays an important role in translational accuracy. This chain is Small ribosomal subunit protein uS4, found in Shewanella violacea.